The following is a 126-amino-acid chain: MLSEFKTFIMRGNVLDLAVGVIIGGAFTGIVKSLTNNLISPIITFFTGGTSDLQNLKLVVTKELTFKYGAFLNDVINFLITAFVVFLLVKFVNRILRTNKKEEVKANPELEVLAEIRDLLEAQKKA.

Helical transmembrane passes span 14–34 and 69–89; these read VLDL…VKSL and GAFL…FLLV.

Belongs to the MscL family. In terms of assembly, homopentamer.

Its subcellular location is the cell membrane. Functionally, channel that opens in response to stretch forces in the membrane lipid bilayer. May participate in the regulation of osmotic pressure changes within the cell. The sequence is that of Large-conductance mechanosensitive channel from Leuconostoc citreum (strain KM20).